Consider the following 312-residue polypeptide: Speedy protein A (312 aa).

The segment at 67–199 (RQEMTAFFKL…SHYIWQRERS (133 aa)) is speedy/Ringo box; Required for CDK-binding. At Ser221 the chain carries Phosphoserine. Thr223 is modified (phosphothreonine).

Belongs to the Speedy/Ringo family. As to quaternary structure, interacts with CDK1. Interacts with CDK2. May interact with CDKN1B/KIP1. Identified in a complex with CDK2 and CDKN1B/KIP1, where it interacts primarily with CDK2.

It is found in the nucleus. Functionally, regulates the G1/S phase transition of the cell cycle by binding and activating CDK1 and CDK2. Contributes to CDK2 activation without promoting CDK2 phosphorylation, by inducing a conformation change of the CDK2 T-loop that obstructs the substrate-binding cleft prior to kinase activation. Interferes with CDKN1B-mediated inhibition of CDK2. Mediates cell survival during the DNA damage process through activation of CDK2. This is Speedy protein A from Rattus norvegicus (Rat).